Consider the following 349-residue polypeptide: Small ribosomal subunit protein eS6 (349 aa).

The segment at 224 to 349 is disordered; the sequence is RRRSRLSSMR…AKKEKKQKKK (126 aa). Basic and acidic residues-rich tracts occupy residues 231-251 and 260-334; these read SMRD…EKAA and KKEA…EAAK.

Belongs to the eukaryotic ribosomal protein eS6 family. Component of the small ribosomal subunit. Part of the small subunit (SSU) processome, composed of more than 70 proteins and the RNA chaperone small nucleolar RNA (snoRNA) U3. Ribosomal protein S6 is the major substrate of protein kinases in eukaryote ribosomes.

The protein localises to the cytoplasm. Its subcellular location is the nucleus. The protein resides in the nucleolus. Functionally, component of the 40S small ribosomal subunit. Plays an important role in controlling cell growth and proliferation through the selective translation of particular classes of mRNA. Part of the small subunit (SSU) processome, first precursor of the small eukaryotic ribosomal subunit. During the assembly of the SSU processome in the nucleolus, many ribosome biogenesis factors, an RNA chaperone and ribosomal proteins associate with the nascent pre-rRNA and work in concert to generate RNA folding, modifications, rearrangements and cleavage as well as targeted degradation of pre-ribosomal RNA by the RNA exosome. This chain is Small ribosomal subunit protein eS6 (RpS6), found in Aedes albopictus (Asian tiger mosquito).